A 294-amino-acid polypeptide reads, in one-letter code: MDNALKAEVLIESLPYICKFQDQKIVIKYGGHAMVDEEAKSWIAKDVVLLRFVGLNPVIIHGGGPEINKAMEKMGKEPEFIHGLRVTDEETLDIVKMVLIGKINGDIVSKLGKYGGKAVGLSGKSGHLISARKKIQYIIKEDEKIEVDLGRVGEVDSINTELIDILLEKKYIPVISPIGIDSQANTYNLNADIAAGDIAGAINAKKLIMITDVDGVMDDINDPSTIYKKLTISQVGEMIDKGIISGGMIPKIEACVNALRKGVDSVHIINGKIPHSVLLEVFTEEGIGTMITRD.

Substrate is bound by residues 63–64, arginine 85, and asparagine 188; that span reads GG.

It belongs to the acetylglutamate kinase family. ArgB subfamily.

The protein localises to the cytoplasm. It catalyses the reaction N-acetyl-L-glutamate + ATP = N-acetyl-L-glutamyl 5-phosphate + ADP. It functions in the pathway amino-acid biosynthesis; L-arginine biosynthesis; N(2)-acetyl-L-ornithine from L-glutamate: step 2/4. Its function is as follows. Catalyzes the ATP-dependent phosphorylation of N-acetyl-L-glutamate. In Methanococcus aeolicus (strain ATCC BAA-1280 / DSM 17508 / OCM 812 / Nankai-3), this protein is Acetylglutamate kinase.